Consider the following 117-residue polypeptide: MTANKTAKIQFYEGTDEPVVPEIRLTRSKDGTTGQALFLFEKPQALSSITDGEITGMRMIDSEGEILTKEVKVKFVDGEPIYLEAVYIWKNSSDFDRFMRFANSYAKSNGLGYSEKK.

It belongs to the Psb28 family. Part of the photosystem II complex.

It localises to the cellular thylakoid membrane. This Prochlorococcus marinus (strain MIT 9215) protein is Photosystem II reaction center Psb28 protein.